The following is a 580-amino-acid chain: Jasmonoyl--L-amino acid synthetase JAR6 (580 aa).

Residue Ser-100 participates in ATP binding. Position 103 (Ser-103) interacts with jasmonate. ATP is bound by residues Met-120, Thr-123, Gly-164, Asn-169, and Gly-332–Trp-337. Residue Thr-167–Tyr-171 participates in an L-alpha-amino acid binding. Ala-329–Gly-332 provides a ligand contact to jasmonate. An an L-alpha-amino acid-binding site is contributed by Lys-534–His-538.

Belongs to the IAA-amido conjugating enzyme family.

It carries out the reaction a jasmonate + an L-alpha-amino acid + ATP = a jasmonyl-L-amino acid + AMP + diphosphate + H(+). Functionally, catalyzes the synthesis of jasmonate-amino acid conjugates by adenylation. Catalyzes the conjugation of jasmonate (JA) to Ile, Leu and Val. Catalyzes the conjugation of JA to Ile that may mediate defense signaling and resistance to the herbivore Manduca sexta caterpillars. This Nicotiana attenuata (Coyote tobacco) protein is Jasmonoyl--L-amino acid synthetase JAR6 (JAR6).